The sequence spans 363 residues: MVMGILNTFKKVYAVTGFFALLAVFSLSQVGSSAFAACAKVDDCFSCHTTQELNAVHKNTPYQGQSCIVCHKAFAADDTCSDAKDGRFAKISSEININKEDWNKIQRAVHETTEKHLVGRKFLNIYGPLGTGAQSVPLDTYGLPSWASIDMLGEGNEAIHPLKREIAQIYLIYKDFWLFRRDIEFSKKCETPIDISAAIGAAVSVSRKEDDMVFNGLSEMGIPGLLTASGRNIMKLSDWSVIGNGFQDVVLAVEKLTSRGFNGPFALVVSPKLYAYLHRVYERTGQLEIQGVKELVNGGVYQSYVFNKDVALVIATGSLNMDLAVGSNYKVEYWGPQDLNHRFRVVGSSVLRIKCPQAICTLE.

The signal sequence occupies residues Met-1 to Ala-36. A diheme c-type cytochrome region spans residues Ala-37 to Phe-74. Residues Cys-44, Cys-47, His-48, Cys-67, Cys-70, and His-71 each coordinate heme. The tract at residues Ala-75–Glu-94 is linker. The interval Ile-95 to Glu-363 is encapsulin domain.

It belongs to the encapsulin family. Family 1 subfamily. The encapsulin nanocompartment is probably formed by 180 monomers, with the N-terminus (diheme domain) inside. There are 36 pores where the pentamers meet as well as 3-fold axis channels and dimer channels. Requires heme as cofactor.

The protein localises to the encapsulin nanocompartment. Fusion of the shell and cargo protein of a type 1 encapsulin nanocompartment. Protein missing its signal peptide makes 33 nm particles in E.coli (called cEnc), protein missing its signal peptide and diheme domain (residues 1-86, called Enc) makes 29 nm particles. The cEnc nancompartment encloses c-type heme. The cargo protein NIR-HAO (AC P0DV45) is probably targeted to the nanocompartment by its association with the diheme domain in cEnc; removal of the diheme domain in Enc halves the amount of cargo. This is Diheme-cytochrome-encapsulin shell fusion protein from Kuenenia stuttgartiensis.